A 122-amino-acid polypeptide reads, in one-letter code: Large ribosomal subunit protein uL14 (122 aa).

Belongs to the universal ribosomal protein uL14 family. In terms of assembly, part of the 50S ribosomal subunit. Forms a cluster with proteins L3 and L19. In the 70S ribosome, L14 and L19 interact and together make contacts with the 16S rRNA in bridges B5 and B8.

In terms of biological role, binds to 23S rRNA. Forms part of two intersubunit bridges in the 70S ribosome. The protein is Large ribosomal subunit protein uL14 of Borreliella burgdorferi (strain ATCC 35210 / DSM 4680 / CIP 102532 / B31) (Borrelia burgdorferi).